Consider the following 327-residue polypeptide: Pantothenate kinase (327 aa).

105-112 (GSVAVGKS) provides a ligand contact to ATP.

The protein belongs to the prokaryotic pantothenate kinase family.

The protein resides in the cytoplasm. The enzyme catalyses (R)-pantothenate + ATP = (R)-4'-phosphopantothenate + ADP + H(+). Its pathway is cofactor biosynthesis; coenzyme A biosynthesis; CoA from (R)-pantothenate: step 1/5. The chain is Pantothenate kinase from Cutibacterium acnes (strain DSM 16379 / KPA171202) (Propionibacterium acnes).